Consider the following 172-residue polypeptide: Myosin regulatory light chain (172 aa).

A Phosphothreonine modification is found at threonine 17. A Phosphoserine modification is found at serine 18. EF-hand domains lie at 27-62 (AQIQ…LGKE), 98-133 (DPEE…MGER), and 134-168 (YSEE…GTKD). Aspartate 40, asparagine 42, aspartate 44, and aspartate 51 together coordinate Ca(2+).

As to quaternary structure, myosin is a hexamer of 2 heavy chains and 4 light chains (two regulatory light chains and two essential light chains). Post-translationally, may be phosphorylated by let-502 or/and pak-1 and dephosphorylated by mel-11 to regulate its activation and myosin II-mediated contraction. As to expression, expressed in the spermathecal and uterine walls. Weak expression in gonadal sheath and intestinal muscle. Not detected in vulval, pharyngeal or body wall muscles.

Its subcellular location is the cytoplasm. It localises to the cytoskeleton. Regulates myosin II activity and organization during embryo elongation. May be involved in the organization of mlc-5 into bundles. Required maternally for cytokinesis during meiosis and mitosis in the early embryo and for the establishment of embryonic anterior-posterior polarity. The chain is Myosin regulatory light chain from Caenorhabditis elegans.